We begin with the raw amino-acid sequence, 202 residues long: Protein GrpE 1 (202 aa).

The protein belongs to the GrpE family. In terms of assembly, homodimer.

It localises to the cytoplasm. In terms of biological role, participates actively in the response to hyperosmotic and heat shock by preventing the aggregation of stress-denatured proteins, in association with DnaK and GrpE. It is the nucleotide exchange factor for DnaK and may function as a thermosensor. Unfolded proteins bind initially to DnaJ; upon interaction with the DnaJ-bound protein, DnaK hydrolyzes its bound ATP, resulting in the formation of a stable complex. GrpE releases ADP from DnaK; ATP binding to DnaK triggers the release of the substrate protein, thus completing the reaction cycle. Several rounds of ATP-dependent interactions between DnaJ, DnaK and GrpE are required for fully efficient folding. The polypeptide is Protein GrpE 1 (Buchnera aphidicola subsp. Schizaphis graminum (strain Sg)).